A 497-amino-acid chain; its full sequence is Probable FAD-binding monooxygenase AlmA (497 aa).

Residues 4–24 (QVDVLIIGAGISGIGLAVHLS) traverse the membrane as a helical segment. The FAD site is built by S15, E36, D56, F62, and V104. 54–56 (RSD) is an NADP(+) binding site. Residues 184–190 (SGATAIT), 208–209 (RS), and 292–293 (RL) each bind NADP(+). V395 contacts FAD.

It belongs to the FAD-binding monooxygenase family. FAD is required as a cofactor.

Its subcellular location is the cell membrane. It functions in the pathway hydrocarbon metabolism; alkane degradation. Is involved in the degradation of n-alkanes with C chain lengths of 32 and longer. Allows Acinetobacter sp. strain DSM 17874 to grow on long-chain n-alkanes such as dotriacontane (C32H66) or hexatriacontane (C36H74) as a sole carbon source. The protein is Probable FAD-binding monooxygenase AlmA of Acinetobacter sp.